Here is a 162-residue protein sequence, read N- to C-terminus: Precorrin-2 dehydrogenase (162 aa).

Residues 20–21 (SI) and 41–42 (PD) each bind NAD(+).

It belongs to the precorrin-2 dehydrogenase / sirohydrochlorin ferrochelatase family.

The enzyme catalyses precorrin-2 + NAD(+) = sirohydrochlorin + NADH + 2 H(+). The protein operates within cofactor biosynthesis; adenosylcobalamin biosynthesis; sirohydrochlorin from precorrin-2: step 1/1. It functions in the pathway porphyrin-containing compound metabolism; siroheme biosynthesis; sirohydrochlorin from precorrin-2: step 1/1. Functionally, catalyzes the dehydrogenation of precorrin-2 to form sirohydrochlorin which is used as a precursor in both siroheme biosynthesis and in the anaerobic branch of adenosylcobalamin biosynthesis. The sequence is that of Precorrin-2 dehydrogenase (sirC) from Bacillus subtilis (strain 168).